The sequence spans 299 residues: tRNA uridine(34) hydroxylase (299 aa).

Residues 132–226 (AGRPVVMLDT…YFEEVGGAHY (95 aa)) form the Rhodanese domain. Catalysis depends on cysteine 186, which acts as the Cysteine persulfide intermediate.

The protein belongs to the TrhO family.

The enzyme catalyses uridine(34) in tRNA + AH2 + O2 = 5-hydroxyuridine(34) in tRNA + A + H2O. Functionally, catalyzes oxygen-dependent 5-hydroxyuridine (ho5U) modification at position 34 in tRNAs. The sequence is that of tRNA uridine(34) hydroxylase from Burkholderia mallei (strain NCTC 10247).